The sequence spans 428 residues: MRVVVLGSGVVGVTSAYYLARAGHEVTVIDREAGPALETSFANAGQISPGYASPWAAPGVPLKAVKWMFQKHAPLAIRLDGTQFQLQWMWQMLQNCTSSRYAVNKGRMVRLAEYSRDCLQALRAETGIQYEGRTGGTLQVFRTQQQFDGAAKDIAVLQEANVPYELLSPAELARAEPALAAVSHKLTGGLRLPGDETGDCQMFTTRLAALAEELGVKFRYNTPIDALAMAGDRIAGVKCGEELVRADSFVVALGSYSTQFLSGLVKIPVYPLKGYSITAPIVNEASAPVSTVLDETYKIAITRFDDRIRVGGMAEIVGFDKSLRQARRETLELCVNDLFPGGGDTSKATFWTGLRPMTPDGTPIVGRTPVPNLFLNTGHGTLGWTMSCGSGQLLADVMSGKQPAIKADDLSVHRYLGEVGGAHRPAYA.

3 to 17 (VVVLGSGVVGVTSAY) provides a ligand contact to FAD.

The protein belongs to the DadA oxidoreductase family. FAD serves as cofactor.

It catalyses the reaction a D-alpha-amino acid + A + H2O = a 2-oxocarboxylate + AH2 + NH4(+). Its pathway is amino-acid degradation; D-alanine degradation; NH(3) and pyruvate from D-alanine: step 1/1. Oxidative deamination of D-amino acids. This chain is D-amino acid dehydrogenase, found in Paraburkholderia phytofirmans (strain DSM 17436 / LMG 22146 / PsJN) (Burkholderia phytofirmans).